Consider the following 575-residue polypeptide: Probable methionine--tRNA ligase, mitochondrial (575 aa).

A 'HIGH' region motif is present at residues Phe-52–His-62. Residues Lys-352–Ser-356 carry the 'KMSKS' region motif. Lys-355 contacts ATP.

This sequence belongs to the class-I aminoacyl-tRNA synthetase family.

It is found in the mitochondrion matrix. It carries out the reaction tRNA(Met) + L-methionine + ATP = L-methionyl-tRNA(Met) + AMP + diphosphate. This is Probable methionine--tRNA ligase, mitochondrial (mmetS) from Dictyostelium discoideum (Social amoeba).